Consider the following 341-residue polypeptide: Ketol-acid reductoisomerase (NADP(+)) (341 aa).

One can recognise a KARI N-terminal Rossmann domain in the interval 2–181; it reads VKVYYNGDAN…GSARAGVIET (180 aa). Residues 25-28, Arg48, Ser52, and 82-85 contribute to the NADP(+) site; these read YGSQ and DEHQ. His107 is an active-site residue. Gly133 serves as a coordination point for NADP(+). One can recognise a KARI C-terminal knotted domain in the interval 182–327; it reads TFKEETETDL…RELRKMMPFV (146 aa). The Mg(2+) site is built by Asp190, Glu194, Glu226, and Glu230. Residue Ser251 participates in substrate binding.

The protein belongs to the ketol-acid reductoisomerase family. The cofactor is Mg(2+).

It carries out the reaction (2R)-2,3-dihydroxy-3-methylbutanoate + NADP(+) = (2S)-2-acetolactate + NADPH + H(+). It catalyses the reaction (2R,3R)-2,3-dihydroxy-3-methylpentanoate + NADP(+) = (S)-2-ethyl-2-hydroxy-3-oxobutanoate + NADPH + H(+). Its pathway is amino-acid biosynthesis; L-isoleucine biosynthesis; L-isoleucine from 2-oxobutanoate: step 2/4. It functions in the pathway amino-acid biosynthesis; L-valine biosynthesis; L-valine from pyruvate: step 2/4. Its function is as follows. Involved in the biosynthesis of branched-chain amino acids (BCAA). Catalyzes an alkyl-migration followed by a ketol-acid reduction of (S)-2-acetolactate (S2AL) to yield (R)-2,3-dihydroxy-isovalerate. In the isomerase reaction, S2AL is rearranged via a Mg-dependent methyl migration to produce 3-hydroxy-3-methyl-2-ketobutyrate (HMKB). In the reductase reaction, this 2-ketoacid undergoes a metal-dependent reduction by NADPH to yield (R)-2,3-dihydroxy-isovalerate. The polypeptide is Ketol-acid reductoisomerase (NADP(+)) (Anoxybacillus flavithermus (strain DSM 21510 / WK1)).